The primary structure comprises 2067 residues: Lipoxygenase homology domain-containing protein 1 (2067 aa).

PLAT domains are found at residues 43–160, 172–287, 296–412, 425–540, 553–673, 684–803, 814–934, 969–1087, 1100–1225, 1254–1372, 1421–1539, 1552–1667, 1679–1797, 1810–1931, and 1948–2064; these read RVYE…RDLL, NKYE…RDIL, ITYI…RQLY, FPWS…REMT, ARYH…RELL, FRYH…VELY, VHYE…RELL, TTFS…RDLF, VPYE…RELV, VLYS…RLFY, IPYY…RVFD, VLYE…CEMC, TSYT…RDFA, TTYE…VFEV, and VKYE…RDLF.

Its subcellular location is the cell projection. The protein resides in the stereocilium. In terms of biological role, involved in hearing. Required for normal function of hair cells in the inner ear. The sequence is that of Lipoxygenase homology domain-containing protein 1 (LOXHD1) from Homo sapiens (Human).